The chain runs to 144 residues: MFLNTIKPGEGAKHAKRRVGRGIGSGLGKTAGRGHKGQKSRSGGFHKVGFEGGQMPLQRRLPKRGFKSLTRKLTAEVRLDDLARLPVDEIDFLALQQAGLVPAAARIAKVILAGKIERAVTLRGLLATAGAKAAIEAAGGQVNE.

The segment at 1–53 (MFLNTIKPGEGAKHAKRRVGRGIGSGLGKTAGRGHKGQKSRSGGFHKVGFEGG) is disordered. Residues 21 to 31 (RGIGSGLGKTA) are compositionally biased toward gly residues.

The protein belongs to the universal ribosomal protein uL15 family. In terms of assembly, part of the 50S ribosomal subunit.

Functionally, binds to the 23S rRNA. This Laribacter hongkongensis (strain HLHK9) protein is Large ribosomal subunit protein uL15.